The primary structure comprises 68 residues: Large ribosomal subunit protein eL24 (68 aa).

4 residues coordinate Zn(2+): Cys-7, Cys-10, Cys-33, and Cys-37. The C4-type zinc finger occupies 7–37 (CDFCGRIIEPGTGKMFVKNDGTILWFCSSKC).

The protein belongs to the eukaryotic ribosomal protein eL24 family. Part of the 50S ribosomal subunit. Forms a cluster with proteins L3 and L14. It depends on Zn(2+) as a cofactor.

Binds to the 23S rRNA. This chain is Large ribosomal subunit protein eL24, found in Methanopyrus kandleri (strain AV19 / DSM 6324 / JCM 9639 / NBRC 100938).